The following is a 562-amino-acid chain: MNNDKRPLYIPFAGPALLSTPLLNKGSAFSAEERISFNLEGLLPETTETIQEQVERAYMQYKAFESDMDKHIYLRNIQDTNETLFYRLVQNHITEMMPIIYTPTVGAACENFSNIYRRGRGLFVSYANRDRIDDILNNASNHNVKVIVVTDGERILGLGDQGIGGMGIPIGKLSLYTACGGISPAYTLPIVLDVGTNNPQRLADPMYMGWRHPRITGADYDAFVEEFIQAVQRRWPDALIQFEDFAQKNAMPLLERYKNRICCFNDDIQGTAAVTVGSLMAACQAAGSKLSEQRITFLGAGSAGCGIAEAIIAQMVSEGISDKKARSQVFMVDRWGLLQEGMPNLLDFQQRLVQKHSVTAKWETEANGFSLLDVVKNAKPTVLIGVSGAPGLFTQEVIQEMHKHCPRPIVFPLSNPTSRVEAVPADIIRWTNGDALVATGSPFDPVIHEGKTYPIVQCNNSYIFPGIGLGVLAVNAKRVTDEMLMESSRALATCSPLAINGKGALLPPLEEIHTVSKRIAYAVAKKAIEQGVALEIADDALQVAIEQHFWQPVYRRYKRTAF.

The Proton donor role is filled by Tyr101. Arg154 contacts NAD(+). Lys172 serves as the catalytic Proton acceptor. The a divalent metal cation site is built by Glu243, Asp244, and Asp267. Positions 267 and 415 each coordinate NAD(+).

Belongs to the malic enzymes family. In terms of assembly, homotetramer. It depends on Mg(2+) as a cofactor. Mn(2+) is required as a cofactor.

It carries out the reaction (S)-malate + NAD(+) = pyruvate + CO2 + NADH. It catalyses the reaction oxaloacetate + H(+) = pyruvate + CO2. This chain is NAD-dependent malic enzyme 1, found in Vibrio vulnificus (strain YJ016).